The primary structure comprises 118 residues: MARIAGVNIPVHKHTVIGLTSIYGIGKTRAQQICQSCKVDPTVKIKDLSEEQIETLRTEVAKFTVEGDLRREVSMDIKRLMDLGCFRGRRHRRSLPVRGQRTKTNARTRKGPRKPIKA.

The disordered stretch occupies residues 91-118; that stretch reads HRRSLPVRGQRTKTNARTRKGPRKPIKA.

Belongs to the universal ribosomal protein uS13 family. As to quaternary structure, part of the 30S ribosomal subunit. Forms a loose heterodimer with protein S19. Forms two bridges to the 50S subunit in the 70S ribosome.

Located at the top of the head of the 30S subunit, it contacts several helices of the 16S rRNA. In the 70S ribosome it contacts the 23S rRNA (bridge B1a) and protein L5 of the 50S subunit (bridge B1b), connecting the 2 subunits; these bridges are implicated in subunit movement. Contacts the tRNAs in the A and P-sites. The protein is Small ribosomal subunit protein uS13 of Francisella philomiragia subsp. philomiragia (strain ATCC 25017 / CCUG 19701 / FSC 153 / O#319-036).